Reading from the N-terminus, the 115-residue chain is MAGAPTVSLPELRSLLASGRARLFDVRSREEAAAGTIPGALNIPVSELESALQMEPAAFQALYSAEKPKLEDEHLVFFCQMGKRGLQATQLARSLGYTGARNYAGAYREWLEKES.

The Rhodanese domain occupies 17-115; it reads ASGRARLFDV…AYREWLEKES (99 aa). The Cysteine persulfide intermediate role is filled by cysteine 79.

In terms of tissue distribution, highly expressed in kidney, liver and skeletal muscle. Lower levels of expression in heart, colon, thymus, spleen, placenta and lung. Weakly expressed in brain, small intestine and peripheral blood leukocytes. Expressed at high levels in the breast carcinoma cell lines MCF-7 and MDA-MB-468 and at a lower level in the breast carcinoma cell line MDA-MB-231, the colon carcinoma call line LoVo and the lung carcinoma cell line A-549. No expression in the cell lines EFO-27 and HeLa, or the normal breast tissue cell lines MCF-10A and H184A1. Detected in invasive ductal carcinoma, but not in the adjacent tissues.

The protein localises to the cytoplasm. Its subcellular location is the perinuclear region. The enzyme catalyses thiosulfate + glutathione = S-sulfanylglutathione + sulfite + H(+). It catalyses the reaction thiosulfate + 2 glutathione = glutathione disulfide + hydrogen sulfide + sulfite + 2 H(+). GSS(-) is a potent inhibitor of TSTD1, since the presence of the sulfur dioxygenase (SDO) strongly increases the TSTD1 catalytic activity. Its function is as follows. Thiosulfate:glutathione sulfurtransferase (TST) required to produce S-sulfanylglutathione (GSS(-)), a central intermediate in hydrogen sulfide metabolism. Provides the link between the first step in mammalian H(2)S metabolism performed by the sulfide:quinone oxidoreductase (SQOR) which catalyzes the conversion of H(2)S to thiosulfate, and the sulfur dioxygenase (SDO) which uses GSS(-) as substrate. The thermodynamic coupling of the irreversible SDO and reversible TST reactions provides a model for the physiologically relevant reaction with thiosulfate as the sulfane donor. GSS(-) spontaneously reacts with glutathione to form glutathione disulfide. The sequence is that of Thiosulfate:glutathione sulfurtransferase (TSTD1) from Homo sapiens (Human).